We begin with the raw amino-acid sequence, 276 residues long: SKA complex subunit 1 homolog (276 aa).

Residues 48-78 (VDVSLTAMEAQLQAVRRRLQEEREAFPKAKK) are a coiled coil.

This sequence belongs to the SKA1 family.

The sequence is that of SKA complex subunit 1 homolog from Oryza sativa subsp. indica (Rice).